The following is a 494-amino-acid chain: O-acetyltransferase ptmV (494 aa).

The tract at residues 181–203 (ESQQDSREKLRHSGGPPDPRFDH) is disordered.

It belongs to the fumigaclavine B O-acetyltransferase family. As to quaternary structure, monomer.

The protein operates within secondary metabolite biosynthesis. In terms of biological role, O-acetyltransferase; part of the gene cluster that mediates the biosynthesis of the indole diterpenes penitrems. The geranylgeranyl diphosphate (GGPP) synthase ptmG catalyzes the first step in penitrem biosynthesis via conversion of farnesyl pyrophosphate and isopentyl pyrophosphate into geranylgeranyl pyrophosphate (GGPP). Condensation of indole-3-glycerol phosphate with GGPP by the prenyl transferase ptmC then forms 3-geranylgeranylindole (3-GGI). Epoxidation by the FAD-dependent monooxygenase ptmM leads to a epoxidized-GGI that is substrate of the terpene cyclase ptmB for cyclization to yield paspaline. Paspaline is subsequently converted to 13-desoxypaxilline by the cytochrome P450 monooxygenase ptmP, the latter being then converted to paxilline by the cytochrome P450 monooxygenase ptmQ. Paxilline is converted to beta-paxitriol via C-10 ketoreduction by the short-chain dehydrogenase ptmH which can be monoprenylated at the C-20 by the indole diterpene prenyltransferase ptmD. A two-step elimination (acetylation and elimination) process performed by the O-acetyltransferase ptmV and ptmI leads to the production of the prenylated form of penijanthine. The FAD-linked oxidoreductase ptmO then converts the prenylated form of penijanthine into PC-M5 which is in turn transformed into PC-M4 by the aromatic dimethylallyltransferase ptmE. Five sequential oxidative transformations performed by the cytochrome P450 monooxygenases ptmK, ptmU, ptmL, ptmN and ptmJ yield the various penitrem compounds. PtmK, ptmU and ptmM are involved in the formation of the key bicyclic ring of penitrem C via the formation of the intermediates secopenitrem D and penitrem D. PtmL catalyzes the epoxidation of penitrem D and C to yield penitrem B and F, respectively. PtmJ catalyzes the last benzylic hydroxylation to convert penitrem B to prenitrem E and penitrem F to penitrem A. The protein is O-acetyltransferase ptmV of Penicillium ochrochloron.